Here is a 111-residue protein sequence, read N- to C-terminus: Urease subunit beta (111 aa).

This sequence belongs to the urease beta subunit family. Heterotrimer of UreA (gamma), UreB (beta) and UreC (alpha) subunits. Three heterotrimers associate to form the active enzyme.

It is found in the cytoplasm. It carries out the reaction urea + 2 H2O + H(+) = hydrogencarbonate + 2 NH4(+). It participates in nitrogen metabolism; urea degradation; CO(2) and NH(3) from urea (urease route): step 1/1. This Psychrobacter cryohalolentis (strain ATCC BAA-1226 / DSM 17306 / VKM B-2378 / K5) protein is Urease subunit beta.